Consider the following 95-residue polypeptide: Hiracin-JM79 immunity factor (95 aa).

Functionally, imparts immunity to bacteriocin hiracin-JM79 to naturally sensitive host strains. In Enterococcus hirae, this protein is Hiracin-JM79 immunity factor.